Here is a 152-residue protein sequence, read N- to C-terminus: Deoxyuridine 5'-triphosphate nucleotidohydrolase (152 aa).

Substrate contacts are provided by residues 71–73 (RSG), N84, 88–90 (LID), and K98.

It belongs to the dUTPase family. Mg(2+) is required as a cofactor.

The enzyme catalyses dUTP + H2O = dUMP + diphosphate + H(+). Its pathway is pyrimidine metabolism; dUMP biosynthesis; dUMP from dCTP (dUTP route): step 2/2. In terms of biological role, this enzyme is involved in nucleotide metabolism: it produces dUMP, the immediate precursor of thymidine nucleotides and it decreases the intracellular concentration of dUTP so that uracil cannot be incorporated into DNA. This Legionella pneumophila subsp. pneumophila (strain Philadelphia 1 / ATCC 33152 / DSM 7513) protein is Deoxyuridine 5'-triphosphate nucleotidohydrolase.